The sequence spans 2256 residues: GON-4-like protein (2256 aa).

Disordered regions lie at residues 1 to 56 (MLPC…DSAG), 105 to 213 (PSLE…SLGP), and 227 to 266 (LFIP…MTYD). Positions 23–35 (EDLHLEAAVKPDT) are enriched in basic and acidic residues. Over residues 40 to 53 (DCTSESLSWGQSHD) the composition is skewed to polar residues. A compositionally biased stretch (basic and acidic residues) spans 141–176 (TREDGGDHTVPEEPPSGEHAEEVKAEGGELEMHSEG). Positions 242–254 (RKKTKKGTKRKRD) are enriched in basic residues. At Ser346 the chain carries Phosphoserine. Residues 366–395 (EDDDSSDEEYQPDEEEEDETAEESLLESDV) show a composition bias toward acidic residues. Disordered regions lie at residues 366-428 (EDDD…VLSE), 441-460 (SAEV…QTRD), and 545-573 (DVEN…DTED). Over residues 545–571 (DVENEDEADDDDDPEYNFLEDLDEPDT) the composition is skewed to acidic residues. A required for interaction with YY1, SIN3A and HDAC1, and transcriptional repression activity region spans residues 609–1363 (EMGFSNMEDD…DCMEEISSDF (755 aa)). At Ser783 the chain carries Phosphoserine. Composition is skewed to low complexity over residues 947–959 (TAGG…TETS) and 1094–1115 (PWSE…LPSL). 4 disordered regions span residues 947–969 (TAGG…KTSP), 1078–1141 (AALP…SPCV), 1241–1288 (AEGK…EAVS), and 1360–1620 (SSDF…SRAR). Residues 1119–1135 (KFRKPYVRRKPTRRKGA) show a composition bias toward basic residues. Residues 1364 to 1386 (PKQDIGEEVKEECCMELDRDSPQ) show a composition bias toward basic and acidic residues. 2 stretches are compositionally biased toward polar residues: residues 1387 to 1401 (EKAS…QTAT) and 1429 to 1444 (LPQS…TVLN). Ser1445 is subject to Phosphoserine. Positions 1475–1495 (GAEEEEEEDFDDLTQDEEDEL) are enriched in acidic residues. Low complexity predominate over residues 1496 to 1510 (SSASEESVLSVPELQ). Acidic residues predominate over residues 1529–1553 (GESEEENSQEENSEPEEEEEEEAEG). Over residues 1606–1620 (RSSHRARSRRGSRAR) the composition is skewed to basic residues. 2 PAH domains span residues 1644–1716 (EQKD…LLPE) and 1726–1797 (EQQA…FDHL). Disordered regions lie at residues 1831 to 1886 (VEEE…LKKS) and 1909 to 1966 (LELV…APIP). The span at 1851 to 1868 (EIGVQHQDKESEWPEAAK) shows a compositional bias: basic and acidic residues. Phosphoserine occurs at positions 1921 and 1994. Disordered stretches follow at residues 2050 to 2078 (PETS…STRD) and 2110 to 2148 (IRGT…VLPK). Positions 2111 to 2129 (RGTSSGASASEAAPTASRE) are enriched in low complexity. Positions 2163–2216 (STGEKVVLWTREADRVILTMCQEQGAQPHTFSVISQQLGNKTPVEVSHRFRELM) constitute a Myb-like domain. A disordered region spans residues 2223-2256 (CEASSEDEDDATSTSNADQLSDHGDLLSEEELDE).

Found in a complex with YY1, SIN3A and HDAC1.

The protein resides in the nucleus. Its function is as follows. Has transcriptional repressor activity, probably as part of a complex with YY1, SIN3A and HDAC1. Required for B cell lymphopoiesis. This chain is GON-4-like protein (Gon4l), found in Rattus norvegicus (Rat).